We begin with the raw amino-acid sequence, 80 residues long: Kappa-actitoxin-Avd4f (80 aa).

The N-terminal stretch at 1–19 (MNKALFLCLVVLCAAVVFA) is a signal peptide. Positions 20 to 31 (AEDLQKAKHAPF) are excised as a propeptide. Disulfide bonds link cysteine 41–cysteine 76, cysteine 43–cysteine 69, and cysteine 59–cysteine 77.

The protein belongs to the sea anemone type 3 (BDS) potassium channel toxin family. In terms of tissue distribution, moderately expressed in the ectodermal tissue from the distal and proximal tentacles, body wall, and oral disk.

It is found in the secreted. The protein localises to the nematocyst. In terms of biological role, blocks Kv3 voltage-gated potassium channels. Reduces blood pressure. The chain is Kappa-actitoxin-Avd4f from Anemonia viridis (Snakelocks anemone).